We begin with the raw amino-acid sequence, 160 residues long: Large ribosomal subunit protein uL16 (160 aa).

It belongs to the universal ribosomal protein uL16 family. As to quaternary structure, part of the 50S ribosomal subunit.

Functionally, binds 23S rRNA and is also seen to make contacts with the A and possibly P site tRNAs. This chain is Large ribosomal subunit protein uL16, found in Prochlorococcus marinus (strain MIT 9515).